The primary structure comprises 141 residues: uncharacterized protein (141 aa).

Residues 114-134 (ILFTCYIQSFSLLISNFFIAI) form a helical membrane-spanning segment.

It is found in the membrane. This is an uncharacterized protein from Schizosaccharomyces pombe (strain 972 / ATCC 24843) (Fission yeast).